Consider the following 458-residue polypeptide: tRNA-2-methylthio-N(6)-dimethylallyladenosine synthase (458 aa).

In terms of domain architecture, MTTase N-terminal spans 15 to 134; it reads KKVFIKTYGC…LPELLEKAKQ (120 aa). Residues cysteine 24, cysteine 60, cysteine 97, cysteine 175, cysteine 179, and cysteine 182 each contribute to the [4Fe-4S] cluster site. The 235-residue stretch at 161–395 folds into the Radical SAM core domain; sequence RKRGVSAFLT…LLLEQQNTFL (235 aa). The 62-residue stretch at 396–457 folds into the TRAM domain; that stretch reads RSKIGQKTDV…SNSFVGEMTN (62 aa).

This sequence belongs to the methylthiotransferase family. MiaB subfamily. In terms of assembly, monomer. The cofactor is [4Fe-4S] cluster.

It localises to the cytoplasm. It carries out the reaction N(6)-dimethylallyladenosine(37) in tRNA + (sulfur carrier)-SH + AH2 + 2 S-adenosyl-L-methionine = 2-methylsulfanyl-N(6)-dimethylallyladenosine(37) in tRNA + (sulfur carrier)-H + 5'-deoxyadenosine + L-methionine + A + S-adenosyl-L-homocysteine + 2 H(+). Functionally, catalyzes the methylthiolation of N6-(dimethylallyl)adenosine (i(6)A), leading to the formation of 2-methylthio-N6-(dimethylallyl)adenosine (ms(2)i(6)A) at position 37 in tRNAs that read codons beginning with uridine. The chain is tRNA-2-methylthio-N(6)-dimethylallyladenosine synthase from Bartonella tribocorum (strain CIP 105476 / IBS 506).